Here is a 227-residue protein sequence, read N- to C-terminus: Cytochrome c oxidase subunit 2 (227 aa).

At 1–14 (MAHAAQVGLQDATS) the chain is on the mitochondrial intermembrane side. A helical membrane pass occupies residues 15–45 (PIMEELIIFHDHALMIIFLICFLVLYALFLT). The Mitochondrial matrix portion of the chain corresponds to 46–59 (LTTKLTNTSISDAQ). A helical transmembrane segment spans residues 60–87 (EMETVWTILPAIILVLIALPSLRILYMT). Topologically, residues 88–227 (DEVNDPSFTI…IFEMGPVFTL (140 aa)) are mitochondrial intermembrane. The Cu cation site is built by histidine 161, cysteine 196, glutamate 198, cysteine 200, histidine 204, and methionine 207. Glutamate 198 is a binding site for Mg(2+).

The protein belongs to the cytochrome c oxidase subunit 2 family. Component of the cytochrome c oxidase (complex IV, CIV), a multisubunit enzyme composed of 14 subunits. The complex is composed of a catalytic core of 3 subunits MT-CO1, MT-CO2 and MT-CO3, encoded in the mitochondrial DNA, and 11 supernumerary subunits COX4I, COX5A, COX5B, COX6A, COX6B, COX6C, COX7A, COX7B, COX7C, COX8 and NDUFA4, which are encoded in the nuclear genome. The complex exists as a monomer or a dimer and forms supercomplexes (SCs) in the inner mitochondrial membrane with NADH-ubiquinone oxidoreductase (complex I, CI) and ubiquinol-cytochrome c oxidoreductase (cytochrome b-c1 complex, complex III, CIII), resulting in different assemblies (supercomplex SCI(1)III(2)IV(1) and megacomplex MCI(2)III(2)IV(2)). Found in a complex with TMEM177, COA6, COX18, COX20, SCO1 and SCO2. Interacts with TMEM177 in a COX20-dependent manner. Interacts with COX20. Interacts with COX16. Cu cation serves as cofactor.

Its subcellular location is the mitochondrion inner membrane. It carries out the reaction 4 Fe(II)-[cytochrome c] + O2 + 8 H(+)(in) = 4 Fe(III)-[cytochrome c] + 2 H2O + 4 H(+)(out). Component of the cytochrome c oxidase, the last enzyme in the mitochondrial electron transport chain which drives oxidative phosphorylation. The respiratory chain contains 3 multisubunit complexes succinate dehydrogenase (complex II, CII), ubiquinol-cytochrome c oxidoreductase (cytochrome b-c1 complex, complex III, CIII) and cytochrome c oxidase (complex IV, CIV), that cooperate to transfer electrons derived from NADH and succinate to molecular oxygen, creating an electrochemical gradient over the inner membrane that drives transmembrane transport and the ATP synthase. Cytochrome c oxidase is the component of the respiratory chain that catalyzes the reduction of oxygen to water. Electrons originating from reduced cytochrome c in the intermembrane space (IMS) are transferred via the dinuclear copper A center (CU(A)) of subunit 2 and heme A of subunit 1 to the active site in subunit 1, a binuclear center (BNC) formed by heme A3 and copper B (CU(B)). The BNC reduces molecular oxygen to 2 water molecules using 4 electrons from cytochrome c in the IMS and 4 protons from the mitochondrial matrix. The chain is Cytochrome c oxidase subunit 2 (MT-CO2) from Pan paniscus (Pygmy chimpanzee).